Here is a 397-residue protein sequence, read N- to C-terminus: Chorismate synthase (397 aa).

NADP(+) is bound by residues arginine 40 and arginine 46. FMN is bound by residues 129 to 131 (RSS), 257 to 258 (QA), glycine 302, 317 to 321 (KPISS), and arginine 343.

It belongs to the chorismate synthase family. Homotetramer. FMNH2 is required as a cofactor.

The catalysed reaction is 5-O-(1-carboxyvinyl)-3-phosphoshikimate = chorismate + phosphate. It participates in metabolic intermediate biosynthesis; chorismate biosynthesis; chorismate from D-erythrose 4-phosphate and phosphoenolpyruvate: step 7/7. In terms of biological role, catalyzes the anti-1,4-elimination of the C-3 phosphate and the C-6 proR hydrogen from 5-enolpyruvylshikimate-3-phosphate (EPSP) to yield chorismate, which is the branch point compound that serves as the starting substrate for the three terminal pathways of aromatic amino acid biosynthesis. This reaction introduces a second double bond into the aromatic ring system. In Chlorobaculum tepidum (strain ATCC 49652 / DSM 12025 / NBRC 103806 / TLS) (Chlorobium tepidum), this protein is Chorismate synthase.